The chain runs to 327 residues: Pyruvate dehydrogenase E1 component subunit beta (327 aa).

A thiamine diphosphate-binding site is contributed by E60. Residues I113, A161, I162, and N166 each coordinate K(+).

In terms of assembly, heterodimer of an alpha and a beta chain. Requires thiamine diphosphate as cofactor.

It localises to the plastid. The protein resides in the chloroplast. It catalyses the reaction N(6)-[(R)-lipoyl]-L-lysyl-[protein] + pyruvate + H(+) = N(6)-[(R)-S(8)-acetyldihydrolipoyl]-L-lysyl-[protein] + CO2. Functionally, the pyruvate dehydrogenase complex catalyzes the overall conversion of pyruvate to acetyl-CoA and CO(2). It contains multiple copies of three enzymatic components: pyruvate dehydrogenase (E1), dihydrolipoamide acetyltransferase (E2) and lipoamide dehydrogenase (E3). The sequence is that of Pyruvate dehydrogenase E1 component subunit beta (pdhB) from Mesostigma viride (Green alga).